A 144-amino-acid chain; its full sequence is Large ribosomal subunit protein uL15 (144 aa).

Residues 1 to 49 are disordered; sequence MRLNTLSPAAGSKSAPKRVGRGIGSGLGKTAGRGHKGQKSRSGGGVRVG. Gly residues predominate over residues 21–31; that stretch reads RGIGSGLGKTA.

The protein belongs to the universal ribosomal protein uL15 family. In terms of assembly, part of the 50S ribosomal subunit.

In terms of biological role, binds to the 23S rRNA. The chain is Large ribosomal subunit protein uL15 from Shewanella frigidimarina (strain NCIMB 400).